We begin with the raw amino-acid sequence, 69 residues long: Ribosome modulation factor (69 aa).

This sequence belongs to the ribosome modulation factor family.

It localises to the cytoplasm. During stationary phase, converts 70S ribosomes to an inactive dimeric form (100S ribosomes). The polypeptide is Ribosome modulation factor (Chromohalobacter salexigens (strain ATCC BAA-138 / DSM 3043 / CIP 106854 / NCIMB 13768 / 1H11)).